We begin with the raw amino-acid sequence, 267 residues long: Indole-3-glycerol phosphate synthase (267 aa).

This sequence belongs to the TrpC family.

The catalysed reaction is 1-(2-carboxyphenylamino)-1-deoxy-D-ribulose 5-phosphate + H(+) = (1S,2R)-1-C-(indol-3-yl)glycerol 3-phosphate + CO2 + H2O. It functions in the pathway amino-acid biosynthesis; L-tryptophan biosynthesis; L-tryptophan from chorismate: step 4/5. In Cupriavidus necator (strain ATCC 17699 / DSM 428 / KCTC 22496 / NCIMB 10442 / H16 / Stanier 337) (Ralstonia eutropha), this protein is Indole-3-glycerol phosphate synthase.